Reading from the N-terminus, the 31-residue chain is Potassium channel toxin alpha-KTx 19.2 (31 aa).

Intrachain disulfides connect C3–C22, C8–C27, and C12–C29.

The protein belongs to the short scorpion toxin superfamily. Potassium channel inhibitor family. Alpha-KTx 19 subfamily. As to quaternary structure, monomer. As to expression, expressed by the venom gland.

The protein resides in the secreted. Its function is as follows. Blocks voltage-gated potassium channels rKv1.1/KCNA1, rKv1.2/KCNA2, hKv1.3/KCNA3, rKv1.6/KCNA6 (IC(50)=75.9 nM) and, to a lesser extent, Shaker IR (with the inactivation domain removed). The sequence is that of Potassium channel toxin alpha-KTx 19.2 from Buthus occitanus tunetanus (Common European scorpion).